The primary structure comprises 320 residues: 1-aminocyclopropane-1-carboxylate oxidase 3 (320 aa).

A coiled-coil region spans residues 111–131; the sequence is NEYRLAMKDFGKRLEILAEEL. A Fe2OG dioxygenase domain is found at 155–256; that stretch reads GPTFATKLSN…RMSIASFYNP (102 aa). 3 residues coordinate Fe cation: H180, D182, and H237. R247 lines the 2-oxoglutarate pocket.

This sequence belongs to the iron/ascorbate-dependent oxidoreductase family. It depends on Fe(2+) as a cofactor.

It catalyses the reaction 1-aminocyclopropane-1-carboxylate + L-ascorbate + O2 = ethene + L-dehydroascorbate + hydrogen cyanide + CO2 + 2 H2O. The protein operates within alkene biosynthesis; ethylene biosynthesis via S-adenosyl-L-methionine; ethylene from S-adenosyl-L-methionine: step 2/2. In terms of biological role, enzyme involved in the ethylene biosynthesis. May promote stem elongation by maximizing the extensibility cells, possibly by activating ethylene biosynthesis, in response to very-long-chain fatty acids (VLCFAs C20:0 to C30:0). This chain is 1-aminocyclopropane-1-carboxylate oxidase 3, found in Arabidopsis thaliana (Mouse-ear cress).